We begin with the raw amino-acid sequence, 338 residues long: Tetraacyldisaccharide 4'-kinase (338 aa).

T61 to T68 is an ATP binding site.

Belongs to the LpxK family.

The catalysed reaction is a lipid A disaccharide + ATP = a lipid IVA + ADP + H(+). It participates in glycolipid biosynthesis; lipid IV(A) biosynthesis; lipid IV(A) from (3R)-3-hydroxytetradecanoyl-[acyl-carrier-protein] and UDP-N-acetyl-alpha-D-glucosamine: step 6/6. Functionally, transfers the gamma-phosphate of ATP to the 4'-position of a tetraacyldisaccharide 1-phosphate intermediate (termed DS-1-P) to form tetraacyldisaccharide 1,4'-bis-phosphate (lipid IVA). The chain is Tetraacyldisaccharide 4'-kinase from Nitrosococcus oceani (strain ATCC 19707 / BCRC 17464 / JCM 30415 / NCIMB 11848 / C-107).